The following is a 212-amino-acid chain: Stringent starvation protein A (212 aa).

Residues Ser-9–Pro-87 form the GST N-terminal domain. One can recognise a GST C-terminal domain in the interval Tyr-92–Leu-209.

It belongs to the GST superfamily. HSP26 family.

Forms an equimolar complex with the RNA polymerase holoenzyme (RNAP) but not with the core enzyme. This Escherichia coli O157:H7 protein is Stringent starvation protein A (sspA).